Reading from the N-terminus, the 313-residue chain is Mitochondrial uncoupling protein 4 (313 aa).

Solcar repeat units lie at residues 4-115, 124-215, and 224-309; these read KSFV…LKNK, LNLS…FKEG, and DGLG…VRKL. 6 helical membrane-spanning segments follow: residues 6 to 26, 84 to 104, 130 to 150, 189 to 209, 230 to 250, and 282 to 302; these read FVEG…LDLI, AAAL…YSTT, IGAG…ADVA, RGSA…LASY, VVAS…VDVI, and YKGF…LFVT.

It belongs to the mitochondrial carrier (TC 2.A.29) family. As to expression, expressed in roots, leaves, stems and flowers.

It is found in the mitochondrion inner membrane. Its function is as follows. PUMPS are mitochondrial transporter proteins that create proton leaks across the inner mitochondrial membrane, thus uncoupling oxidative phosphorylation. This leads to a decrease in the efficiency of oxidative phosphorylation and an increase in heat production. May be involved in protecting plant cells against oxidative stress damage. Recombinant PUMP4, reconstituted into liposomes, transports a wide range of dicarboxylic acids including malate, oxaloacetate and succinate as well as phosphate, sulfate and thiosulfate. However, it is unknown if these transports are of any biological significance in vivo. The protein is Mitochondrial uncoupling protein 4 (PUMP4) of Arabidopsis thaliana (Mouse-ear cress).